Reading from the N-terminus, the 462-residue chain is MQFLPLFHKLQGRPVLVIGGGEVALRKARLLSDAGARLRVVAPEIRSELQELAGADGICLRGYASSDLQGVALVIAATDDEPLNARISAEAQAQGIPVNVVDAPALCSVIFPAIVDRSPLIVAVSSGGDAPVLARLIRAKIETWIPATYGQLANLGKRFRDRVKQLFPDVQQRRVFWEDVFQGQIAESVFAGKPEEGERLLEERLAGAAPRALGEVYLVGAGPGDPDLLTFRALRLMQQADVVLYDRLVAPAIIELCRRDAERIYVGKRRADHAVPQEQINQLLIDLARQGKRVLRLKGGDPFIFGRGGEEIEQLAAEDIPFQVVPGITAASGCAAYAGIPLTHRDHAQSVRFVTGHLKDGSSNLPWKDLVAPGQTLVFYMGLVGLYGICEQLIAHGRSAATPAALVQQGTTQNQRVFTGTLETLPQLVAQHEVHAPTLVIVGEVVTLRDKLAWFEGAQGSL.

The tract at residues 1–201 (MQFLPLFHKL…GKPEEGERLL (201 aa)) is precorrin-2 dehydrogenase /sirohydrochlorin ferrochelatase. NAD(+) contacts are provided by residues 22 to 23 (EV) and 43 to 44 (PE). Ser-126 carries the post-translational modification Phosphoserine. The segment at 214-462 (GEVYLVGAGP…AWFEGAQGSL (249 aa)) is uroporphyrinogen-III C-methyltransferase. S-adenosyl-L-methionine is bound at residue Pro-223. Asp-246 serves as the catalytic Proton acceptor. Residue Lys-268 is the Proton donor of the active site. S-adenosyl-L-methionine is bound by residues 299–301 (GGD), Ile-304, 329–330 (TA), Met-381, and Gly-410.

This sequence in the N-terminal section; belongs to the precorrin-2 dehydrogenase / sirohydrochlorin ferrochelatase family. It in the C-terminal section; belongs to the precorrin methyltransferase family.

The catalysed reaction is uroporphyrinogen III + 2 S-adenosyl-L-methionine = precorrin-2 + 2 S-adenosyl-L-homocysteine + H(+). It carries out the reaction precorrin-2 + NAD(+) = sirohydrochlorin + NADH + 2 H(+). It catalyses the reaction siroheme + 2 H(+) = sirohydrochlorin + Fe(2+). The protein operates within cofactor biosynthesis; adenosylcobalamin biosynthesis; precorrin-2 from uroporphyrinogen III: step 1/1. It participates in cofactor biosynthesis; adenosylcobalamin biosynthesis; sirohydrochlorin from precorrin-2: step 1/1. Its pathway is porphyrin-containing compound metabolism; siroheme biosynthesis; precorrin-2 from uroporphyrinogen III: step 1/1. It functions in the pathway porphyrin-containing compound metabolism; siroheme biosynthesis; siroheme from sirohydrochlorin: step 1/1. The protein operates within porphyrin-containing compound metabolism; siroheme biosynthesis; sirohydrochlorin from precorrin-2: step 1/1. Multifunctional enzyme that catalyzes the SAM-dependent methylations of uroporphyrinogen III at position C-2 and C-7 to form precorrin-2 via precorrin-1. Then it catalyzes the NAD-dependent ring dehydrogenation of precorrin-2 to yield sirohydrochlorin. Finally, it catalyzes the ferrochelation of sirohydrochlorin to yield siroheme. The chain is Siroheme synthase from Ectopseudomonas mendocina (strain ymp) (Pseudomonas mendocina).